We begin with the raw amino-acid sequence, 217 residues long: Small ribosomal subunit protein uS5 (217 aa).

In terms of domain architecture, S5 DRBM spans 49–112 (LEEKVLDVKL…AQAKKNIIRV (64 aa)).

It belongs to the universal ribosomal protein uS5 family. As to quaternary structure, part of the 30S ribosomal subunit. Contacts protein S4.

Functionally, with S4 and S12 plays an important role in translational accuracy. This chain is Small ribosomal subunit protein uS5, found in Methanocaldococcus jannaschii (strain ATCC 43067 / DSM 2661 / JAL-1 / JCM 10045 / NBRC 100440) (Methanococcus jannaschii).